We begin with the raw amino-acid sequence, 399 residues long: uncharacterized protein (399 aa).

The disordered stretch occupies residues 254–335 (SRVSTGDTSP…FFRDSDDDGD (82 aa)). Residues 255–264 (RVSTGDTSPY) are compositionally biased toward polar residues. Residues 310–329 (RNAEMKKSHSANDSEEFFRD) are compositionally biased toward basic and acidic residues.

This is an uncharacterized protein from Xenopus laevis (African clawed frog).